The chain runs to 490 residues: ATP synthase subunit beta, chloroplastic (490 aa).

Gly-170–Thr-177 provides a ligand contact to ATP.

This sequence belongs to the ATPase alpha/beta chains family. As to quaternary structure, F-type ATPases have 2 components, CF(1) - the catalytic core - and CF(0) - the membrane proton channel. CF(1) has five subunits: alpha(3), beta(3), gamma(1), delta(1), epsilon(1). CF(0) has four main subunits: a(1), b(1), b'(1) and c(9-12).

It localises to the plastid. It is found in the chloroplast thylakoid membrane. It catalyses the reaction ATP + H2O + 4 H(+)(in) = ADP + phosphate + 5 H(+)(out). Produces ATP from ADP in the presence of a proton gradient across the membrane. The catalytic sites are hosted primarily by the beta subunits. This is ATP synthase subunit beta, chloroplastic from Pinus koraiensis (Korean pine).